Reading from the N-terminus, the 194-residue chain is Kallikrein-like enzyme LV-Ka (194 aa).

Intrachain disulfides connect Cys7-Cys99, Cys44-Cys192, Cys78-Cys146, Cys110-Cys125, and Cys136-Cys161. The Peptidase S1 domain maps to 36 to 185 (LNQEDKFICP…YTEWIQSIIA (150 aa)). The active-site Charge relay system is Ser140.

This sequence belongs to the peptidase S1 family. Snake venom subfamily. As to quaternary structure, monomer. N-glycosylated. Expressed by the venom gland.

The protein resides in the secreted. With respect to regulation, completely inhibited by the serine protease inhibitors NPGB and PMSF, partially inhibited by benzamidines, and weakly or not inhibited by SBTI and EDTA. Functionally, shows kallikrein-like activity, releasing bradykinin from kininogen. Also activates plasminogen, which is also a plasma kallikrein activity. Is active upon the kallikrein substrates S-2266 and S-2302, suggesting a preference for Arg in P1 position. In vivo, lowers blood pressure after intravenous injection in rat. This chain is Kallikrein-like enzyme LV-Ka, found in Lachesis muta muta (Bushmaster).